The primary structure comprises 250 residues: 2,3-bisphosphoglycerate-dependent phosphoglycerate mutase (250 aa).

Residues 10 to 17 (RHGESQWN), 23 to 24 (TG), Arg-62, 89 to 92 (ERHY), Lys-100, 116 to 117 (RR), and 185 to 186 (GN) each bind substrate. Residue His-11 is the Tele-phosphohistidine intermediate of the active site. The Proton donor/acceptor role is filled by Glu-89.

This sequence belongs to the phosphoglycerate mutase family. BPG-dependent PGAM subfamily. As to quaternary structure, homodimer.

It carries out the reaction (2R)-2-phosphoglycerate = (2R)-3-phosphoglycerate. Its pathway is carbohydrate degradation; glycolysis; pyruvate from D-glyceraldehyde 3-phosphate: step 3/5. Its function is as follows. Catalyzes the interconversion of 2-phosphoglycerate and 3-phosphoglycerate. This Erwinia tasmaniensis (strain DSM 17950 / CFBP 7177 / CIP 109463 / NCPPB 4357 / Et1/99) protein is 2,3-bisphosphoglycerate-dependent phosphoglycerate mutase.